The chain runs to 193 residues: Peptidyl-tRNA hydrolase (193 aa).

A tRNA-binding site is contributed by Y17. H22 acts as the Proton acceptor in catalysis. Positions 68, 70, and 116 each coordinate tRNA.

It belongs to the PTH family. In terms of assembly, monomer.

Its subcellular location is the cytoplasm. The enzyme catalyses an N-acyl-L-alpha-aminoacyl-tRNA + H2O = an N-acyl-L-amino acid + a tRNA + H(+). In terms of biological role, hydrolyzes ribosome-free peptidyl-tRNAs (with 1 or more amino acids incorporated), which drop off the ribosome during protein synthesis, or as a result of ribosome stalling. Its function is as follows. Catalyzes the release of premature peptidyl moieties from peptidyl-tRNA molecules trapped in stalled 50S ribosomal subunits, and thus maintains levels of free tRNAs and 50S ribosomes. The protein is Peptidyl-tRNA hydrolase of Acinetobacter baylyi (strain ATCC 33305 / BD413 / ADP1).